The chain runs to 367 residues: tRNA-specific 2-thiouridylase MnmA (367 aa).

ATP is bound by residues 12–19 and methionine 38; that span reads GMSGGVDS. Positions 98–100 are interaction with target base in tRNA; that stretch reads NPD. Cysteine 103 acts as the Nucleophile in catalysis. Cysteine 103 and cysteine 200 are joined by a disulfide. Glycine 128 serves as a coordination point for ATP. Positions 150-152 are interaction with tRNA; sequence KDQ. The active-site Cysteine persulfide intermediate is the cysteine 200. Residues 312 to 313 form an interaction with tRNA region; it reads RY.

It belongs to the MnmA/TRMU family. In terms of assembly, interacts with TusE.

The protein resides in the cytoplasm. The enzyme catalyses S-sulfanyl-L-cysteinyl-[protein] + uridine(34) in tRNA + AH2 + ATP = 2-thiouridine(34) in tRNA + L-cysteinyl-[protein] + A + AMP + diphosphate + H(+). Functionally, catalyzes the 2-thiolation of uridine at the wobble position (U34) of tRNA(Lys), tRNA(Glu) and tRNA(Gln), leading to the formation of s(2)U34, the first step of tRNA-mnm(5)s(2)U34 synthesis. Sulfur is provided by IscS, via a sulfur-relay system. Binds ATP and its substrate tRNAs. This is tRNA-specific 2-thiouridylase MnmA from Blochmanniella pennsylvanica (strain BPEN).